Consider the following 171-residue polypeptide: Inosine/xanthosine triphosphatase (171 aa).

8–13 (TTNPAK) provides a ligand contact to substrate. The Mg(2+) site is built by Glu-38 and Glu-68. Substrate is bound at residue 68 to 69 (EA).

Belongs to the YjjX NTPase family. As to quaternary structure, homodimer. Mg(2+) serves as cofactor. Requires Mn(2+) as cofactor.

It catalyses the reaction XTP + H2O = XDP + phosphate + H(+). It carries out the reaction ITP + H2O = IDP + phosphate + H(+). In terms of biological role, phosphatase that hydrolyzes non-canonical purine nucleotides such as XTP and ITP to their respective diphosphate derivatives. Probably excludes non-canonical purines from DNA/RNA precursor pool, thus preventing their incorporation into DNA/RNA and avoiding chromosomal lesions. The polypeptide is Inosine/xanthosine triphosphatase (yjjX) (Salmonella arizonae (strain ATCC BAA-731 / CDC346-86 / RSK2980)).